The following is a 1164-amino-acid chain: DNA-directed RNA polymerase (1164 aa).

This sequence belongs to the RNA polymerase beta chain family. As to quaternary structure, the DNA-dependent RNA polymerase used for intermediate and late genes expression consists of eight subunits 147 kDa, 133 kDa, 35 kDa, 30 kDa, 22 kDa, 19 kDa, 18 kDa and 7 kDa totalling more than 500 kDa in mass. The same holoenzyme, with the addition of the transcription-specificity factor RAP94, is used for early gene expression.

It is found in the virion. The enzyme catalyses RNA(n) + a ribonucleoside 5'-triphosphate = RNA(n+1) + diphosphate. Part of the DNA-dependent RNA polymerase which catalyzes the transcription of viral DNA into RNA using the four ribonucleoside triphosphates as substrates. Responsible for the transcription of early, intermediate and late genes. DNA-dependent RNA polymerase associates with the early transcription factor (ETF), itself composed of OPG118 and OPG133, thereby allowing the early genes transcription. Late transcription, and probably also intermediate transcription, require newly synthesized RNA polymerase. This Monkeypox virus protein is DNA-directed RNA polymerase (OPG151).